We begin with the raw amino-acid sequence, 654 residues long: WD repeat-containing protein 70 (654 aa).

Disordered regions lie at residues 1–26 (MERS…VTMG) and 43–175 (FEQT…DSHE). Positions 45–78 (QTRRTAVERSRKTLEAREKEEEMNREKELRRQNE) are enriched in basic and acidic residues. Residues 99-111 (RDTSSSESEQSSD) show a composition bias toward low complexity. The segment covering 147–164 (NEEEEEAEEEEEEEEEEE) has biased composition (acidic residues). Residues 165 to 175 (NPVHKIPDSHE) are compositionally biased toward basic and acidic residues. WD repeat units lie at residues 180 to 219 (HGTK…ASFK), 227 to 268 (CECH…ECIK), 281 to 321 (GHTA…KQKS), 330 to 369 (GKKV…HPKF), 376 to 415 (DSGT…KPLF), 421 to 466 (PTMF…RVYE), and 469 to 508 (ITDA…QRGA). Residue K296 forms a Glycyl lysine isopeptide (Lys-Gly) (interchain with G-Cter in SUMO2) linkage. K452 bears the N6-acetyllysine mark. The span at 540–565 (REPRQRSTRKQLEKDRLDPLKSHKPE) shows a compositional bias: basic and acidic residues. The interval 540–579 (REPRQRSTRKQLEKDRLDPLKSHKPEPPVAGPGRGGRVGT) is disordered. The residue at position 579 (T579) is a Phosphothreonine. Glycyl lysine isopeptide (Lys-Gly) (interchain with G-Cter in SUMO2) cross-links involve residues K590 and K596. S621 and S638 each carry phosphoserine. Residues 630 to 654 (KTMFAQVESDDEEAKNEPEWKKRKI) form a disordered region. Residues 644-654 (KNEPEWKKRKI) are compositionally biased toward basic and acidic residues.

It belongs to the WD repeat GAD-1 family.

The sequence is that of WD repeat-containing protein 70 (WDR70) from Homo sapiens (Human).